We begin with the raw amino-acid sequence, 455 residues long: Argininosuccinate lyase (455 aa).

This sequence belongs to the lyase 1 family. Argininosuccinate lyase subfamily.

The protein localises to the cytoplasm. It carries out the reaction 2-(N(omega)-L-arginino)succinate = fumarate + L-arginine. It participates in amino-acid biosynthesis; L-arginine biosynthesis; L-arginine from L-ornithine and carbamoyl phosphate: step 3/3. The sequence is that of Argininosuccinate lyase from Shewanella baltica (strain OS155 / ATCC BAA-1091).